The following is a 353-amino-acid chain: 3-dehydroquinate synthase (353 aa).

This sequence belongs to the archaeal-type DHQ synthase family.

The enzyme catalyses 2-amino-2,3,7-trideoxy-D-lyxo-hept-6-ulosonate + NAD(+) + H2O = 3-dehydroquinate + NH4(+) + NADH + H(+). Its function is as follows. Catalyzes the oxidative deamination and cyclization of 2-amino-3,7-dideoxy-D-threo-hept-6-ulosonic acid (ADH) to yield 3-dehydroquinate (DHQ), which is fed into the canonical shikimic pathway of aromatic amino acid biosynthesis. The polypeptide is 3-dehydroquinate synthase (Nitrosopumilus maritimus (strain SCM1)).